Here is a 511-residue protein sequence, read N- to C-terminus: Sodium/proline symporter (511 aa).

A run of 13 helical transmembrane segments spans residues 16–36, 53–73, 84–104, 138–158, 173–193, 199–219, 239–259, 285–305, 326–346, 380–400, 409–429, 437–457, and 466–486; these read WQTY…AFTY, IGPY…WMIM, LSAM…YFVV, IISG…GFVS, FGLI…GYLA, FFQG…AMMN, LFKG…LGYF, ISWM…GIAF, VLFH…AIMS, FVMI…AIAW, LVGN…LFAL, AGAV…IAWI, and IFGL…TYVV.

It belongs to the sodium:solute symporter (SSF) (TC 2.A.21) family.

It is found in the cell membrane. It carries out the reaction L-proline(in) + Na(+)(in) = L-proline(out) + Na(+)(out). Catalyzes the sodium-dependent uptake of extracellular L-proline. Since most S.aureus strains are L-proline auxotrophs, this transporter may aid the bacterial persistence during an infection of tissues with low proline concentrations. The polypeptide is Sodium/proline symporter (Staphylococcus aureus).